Here is a 146-residue protein sequence, read N- to C-terminus: Ninjurin-1 (146 aa).

A disordered region spans residues 1 to 33 (MASEAMELNGGVNRRDDPGARPQQGRMSRNTPL). Over 1–75 (MASEAMELNG…ELGPSFSFYI (75 aa)) the chain is Extracellular. The interval 37-66 (HYANKKSAAESMLDIALLMANASQLKTVLE) is required to induce plasma membrane rupture. The tract at residues 41 to 52 (KKSAAESMLDIA) is helix alpha1. The segment at 55–71 (MANASQLKTVLELGPSF) is helix alpha2. N-linked (GlcNAc...) asparagine glycosylation occurs at asparagine 57. The helical transmembrane segment at 76 to 100 (PLITLISISLTLQIIVGILLIFIVK) threads the bilayer. Topologically, residues 101 to 110 (WNLNDSSKHY) are cytoplasmic. Residues 111-135 (ILNLLENIVTALVFIVVVVNVFITA) traverse the membrane as a helical segment. The Extracellular portion of the chain corresponds to 136 to 146 (FGVQRPDDKTS).

Belongs to the ninjurin family. Homooligomer; in response to death stimuli, homooligomerizes into long, highly branched filaments and large, ring-shaped structures in the membrane. As to quaternary structure, homodimer; in absence of death stimuli, forms an inactive homodimer. Homooligomer; in response to death stimuli, homooligomerizes into long, highly branched filaments and large, ring-shaped structures in the membrane.

It is found in the cell membrane. It localises to the synaptic cell membrane. Its activity is regulated as follows. In normal conditions, NINJ1 is inactivated. In response to death stimuli, homooligomerizes and disrupts membrane integrity by introducing the hydrophilic faces of alpha1 and alpha2 helices into the hydrophobic membrane. Homooligomerization and ability to mediate plasma membrane rupture is inhibited by glycine; it is unclear whether glycine directly or indirectly inhibits homooligomerization. In response to death stimuli, homooligomerizes and disrupts membrane integrity by introducing the hydrophilic faces of alpha1 and alpha2 helices into the hydrophobic membrane. Homooligomerization and ability to mediate plasma membrane rupture is inhibited by glycine; it is unclear whether glycine directly or indirectly inhibits homooligomerization. In normal conditions, NINJ1 is autoinhibited via formation of a homodimer: in the inactive homodimer, the alpha1 and alpha2 helices (residues 41-71) form a single transmembrane region without a kink, in which hydrophilic faces of alpha1 and alpha2 helices are sequestered. Effector of various programmed cell death, such as pyroptosis and necroptosis, which mediates plasma membrane rupture (cytolysis). Oligomerizes in response to death stimuli and forms ring-like structures on the plasma membrane: acts by cutting and shedding membrane disks, like a cookie cutter, leading to membrane damage and loss that cannot be repaired by the cell. Plasma membrane rupture leads to release intracellular molecules named damage-associated molecular patterns (DAMPs) that propagate the inflammatory response. Mechanistically, mediates plasma membrane rupture by introducing hydrophilic faces of 2 alpha helices into the hydrophobic membrane. Induces plasma membrane rupture downstream of Gasdermin (GSDMA, GSDMB, GSDMC, GSDMD, or GSDME) or MLKL during pyroptosis or necroptosis, respectively. Also acts as an effector of PANoptosis and ferroptosis. Induces plasma membrane rupture in response to cell swelling caused by osmotic stress. Acts as a regulator of Toll-like receptor 4 (TLR4) signaling triggered by lipopolysaccharide (LPS) during systemic inflammation; directly binds LPS. Involved in leukocyte migration during inflammation by promoting transendothelial migration of macrophages via homotypic binding. Promotes the migration of monocytes across the brain endothelium to central nervous system inflammatory lesions. Also acts as a homophilic transmembrane adhesion molecule involved in various processes such as axonal growth, cell chemotaxis and angiogenesis. Promotes cell adhesion by mediating homophilic interactions via its extracellular N-terminal adhesion motif (N-NAM). Also involved in striated muscle growth and differentiation. This is Ninjurin-1 from Danio rerio (Zebrafish).